A 240-amino-acid polypeptide reads, in one-letter code: Probable septum site-determining protein MinC (240 aa).

The protein belongs to the MinC family. In terms of assembly, interacts with MinD and FtsZ.

Cell division inhibitor that blocks the formation of polar Z ring septums. Rapidly oscillates between the poles of the cell to destabilize FtsZ filaments that have formed before they mature into polar Z rings. Prevents FtsZ polymerization. This chain is Probable septum site-determining protein MinC, found in Acinetobacter baumannii (strain ATCC 17978 / DSM 105126 / CIP 53.77 / LMG 1025 / NCDC KC755 / 5377).